The sequence spans 339 residues: Heat-inducible transcription repressor HrcA (339 aa).

The protein belongs to the HrcA family.

Its function is as follows. Negative regulator of class I heat shock genes (grpE-dnaK-dnaJ and groELS operons). Prevents heat-shock induction of these operons. The chain is Heat-inducible transcription repressor HrcA from Paraburkholderia phymatum (strain DSM 17167 / CIP 108236 / LMG 21445 / STM815) (Burkholderia phymatum).